A 388-amino-acid chain; its full sequence is Xylose isomerase (388 aa).

Active-site residues include His-54 and Asp-57. Mg(2+) is bound by residues Glu-181, Glu-217, His-220, Asp-245, Asp-255, Asp-257, and Asp-287.

It belongs to the xylose isomerase family. As to quaternary structure, homotetramer. The cofactor is Mg(2+).

It is found in the cytoplasm. The enzyme catalyses alpha-D-xylose = alpha-D-xylulofuranose. In terms of biological role, involved in D-xylose catabolism. This Streptomyces murinus protein is Xylose isomerase (xylA).